A 371-amino-acid chain; its full sequence is tRNA-specific 2-thiouridylase MnmA (371 aa).

Residues 24-31 and L50 each bind ATP; that span reads AMSGGVDS. C119 serves as the catalytic Nucleophile. A disulfide bridge links C119 with C215. Residue G143 participates in ATP binding. Residues 165 to 167 form an interaction with tRNA region; it reads KDQ. C215 serves as the catalytic Cysteine persulfide intermediate.

This sequence belongs to the MnmA/TRMU family.

It localises to the cytoplasm. The enzyme catalyses S-sulfanyl-L-cysteinyl-[protein] + uridine(34) in tRNA + AH2 + ATP = 2-thiouridine(34) in tRNA + L-cysteinyl-[protein] + A + AMP + diphosphate + H(+). Catalyzes the 2-thiolation of uridine at the wobble position (U34) of tRNA, leading to the formation of s(2)U34. The protein is tRNA-specific 2-thiouridylase MnmA of Neorickettsia sennetsu (strain ATCC VR-367 / Miyayama) (Ehrlichia sennetsu).